Here is a 92-residue protein sequence, read N- to C-terminus: Small ribosomal subunit protein bS20 (92 aa).

Residues 1-11 (MANIKSQKKRI) are compositionally biased toward basic residues. Residues 1–22 (MANIKSQKKRIRQNEKARLRNK) form a disordered region.

Belongs to the bacterial ribosomal protein bS20 family.

Its function is as follows. Binds directly to 16S ribosomal RNA. The protein is Small ribosomal subunit protein bS20 of Thermobifida fusca (strain YX).